The sequence spans 550 residues: Glucose-6-phosphate isomerase 3 (550 aa).

Residue Glu-357 is the Proton donor of the active site. Catalysis depends on residues His-388 and Lys-514.

It belongs to the GPI family.

It localises to the cytoplasm. The catalysed reaction is alpha-D-glucose 6-phosphate = beta-D-fructose 6-phosphate. It participates in carbohydrate biosynthesis; gluconeogenesis. Its pathway is carbohydrate degradation; glycolysis; D-glyceraldehyde 3-phosphate and glycerone phosphate from D-glucose: step 2/4. In terms of biological role, catalyzes the reversible isomerization of glucose-6-phosphate to fructose-6-phosphate. The protein is Glucose-6-phosphate isomerase 3 of Rhodococcus jostii (strain RHA1).